Here is a 159-residue protein sequence, read N- to C-terminus: Cyclic pyranopterin monophosphate synthase (159 aa).

Residues 75-77 and 113-114 contribute to the substrate site; these read LCH and ME. The active site involves Asp-128.

The protein belongs to the MoaC family. In terms of assembly, homohexamer; trimer of dimers.

It catalyses the reaction (8S)-3',8-cyclo-7,8-dihydroguanosine 5'-triphosphate = cyclic pyranopterin phosphate + diphosphate. It participates in cofactor biosynthesis; molybdopterin biosynthesis. Catalyzes the conversion of (8S)-3',8-cyclo-7,8-dihydroguanosine 5'-triphosphate to cyclic pyranopterin monophosphate (cPMP). The sequence is that of Cyclic pyranopterin monophosphate synthase from Yersinia pseudotuberculosis serotype O:3 (strain YPIII).